Here is an 89-residue protein sequence, read N- to C-terminus: Small ribosomal subunit protein uS15 (89 aa).

This sequence belongs to the universal ribosomal protein uS15 family. Part of the 30S ribosomal subunit. Forms a bridge to the 50S subunit in the 70S ribosome, contacting the 23S rRNA.

One of the primary rRNA binding proteins, it binds directly to 16S rRNA where it helps nucleate assembly of the platform of the 30S subunit by binding and bridging several RNA helices of the 16S rRNA. Its function is as follows. Forms an intersubunit bridge (bridge B4) with the 23S rRNA of the 50S subunit in the ribosome. In Pseudomonas aeruginosa (strain LESB58), this protein is Small ribosomal subunit protein uS15.